The following is a 414-amino-acid chain: Arrestin domain-containing protein 3 (414 aa).

Short sequence motifs (PPxY motif) lie at residues 346 to 349 and 391 to 394; these read PPSY and PPLY. Residues 393 to 414 are disordered; sequence LYSEIDPNPDQPADDRPSCPSR. Over residues 405-414 the composition is skewed to basic and acidic residues; it reads ADDRPSCPSR.

This sequence belongs to the arrestin family. As to quaternary structure, interacts (via PPxY motifs) with NEDD4 (via WW domains). Interacts with ADRB2. Interacts with ADRB3. Interacts with HGS (via PPxY motifs). Does not bind TXN (thioredoxin). Interacts with ITCH.

The protein resides in the cytoplasm. It localises to the cell membrane. It is found in the lysosome. Its subcellular location is the endosome. The protein localises to the early endosome. Adapter protein that plays a role in regulating cell-surface expression of adrenergic receptors and probably also other G protein-coupled receptors. Plays a role in NEDD4-mediated ubiquitination and endocytosis af activated ADRB2 and subsequent ADRB2 degradation. May recruit NEDD4 to ADRB2. Alternatively, may function as adapter protein that does not play a major role in recruiting NEDD4 to ADRB2, but rather plays a role in a targeting ADRB2 to endosomes. This is Arrestin domain-containing protein 3 (ARRDC3) from Bos taurus (Bovine).